The chain runs to 730 residues: Elongation factor 2 (730 aa).

The region spanning 19–229 (DYIRNIGIVA…NITFKDIIQY (211 aa)) is the tr-type G domain. GTP is bound by residues 28 to 35 (AHIDHGKT), 94 to 98 (DTPGH), and 148 to 151 (NKVD). His-597 is subject to Diphthamide.

The protein belongs to the TRAFAC class translation factor GTPase superfamily. Classic translation factor GTPase family. EF-G/EF-2 subfamily.

The protein resides in the cytoplasm. Functionally, catalyzes the GTP-dependent ribosomal translocation step during translation elongation. During this step, the ribosome changes from the pre-translocational (PRE) to the post-translocational (POST) state as the newly formed A-site-bound peptidyl-tRNA and P-site-bound deacylated tRNA move to the P and E sites, respectively. Catalyzes the coordinated movement of the two tRNA molecules, the mRNA and conformational changes in the ribosome. This Methanosphaera stadtmanae (strain ATCC 43021 / DSM 3091 / JCM 11832 / MCB-3) protein is Elongation factor 2.